The sequence spans 420 residues: G2/mitotic-specific cyclin-A (420 aa).

The tract at residues 64-93 (VQGSRIQPTRAAKEKLKPPQNISDSQLVND) is disordered. The segment covering 83–93 (QNISDSQLVND) has biased composition (polar residues).

It belongs to the cyclin family. Cyclin AB subfamily.

Essential for the control of the cell cycle at the G2/M (mitosis) transition. Interacts with the CDC2 and CDK2 protein kinases to form MPF. G2/M cyclins accumulate steadily during G2 and are abruptly destroyed at mitosis. This Hydra viridissima (Green hydra) protein is G2/mitotic-specific cyclin-A.